Reading from the N-terminus, the 292-residue chain is Tetrahydromethanopterin:alpha-L-glutamate ligase (292 aa).

An ATP-grasp domain is found at 103-286; that stretch reads SFLMEVHKIP…IAQNLIDEAL (184 aa). ATP contacts are provided by residues K138, 176 to 188, and R204; that span reads QEFV…VYRD. Mg(2+)-binding residues include D247, E259, and N261. Mn(2+) is bound by residues D247, E259, and N261.

It belongs to the RimK family. MptN subfamily. Homodimer. Requires Mg(2+) as cofactor. Mn(2+) serves as cofactor.

The enzyme catalyses 5,6,7,8-tetrahydromethanopterin + L-glutamate + ATP = 5,6,7,8-tetrahydrosarcinapterin + ADP + phosphate + H(+). It participates in cofactor biosynthesis; 5,6,7,8-tetrahydrosarcinapterin biosynthesis. Functionally, catalyzes the ATP or GTP-dependent addition of one L-glutamate molecule to tetrahydromethanopterin, producing tetrahydrosarcinapterin. In Methanococcus maripaludis (strain DSM 14266 / JCM 13030 / NBRC 101832 / S2 / LL), this protein is Tetrahydromethanopterin:alpha-L-glutamate ligase (mptN).